We begin with the raw amino-acid sequence, 101 residues long: Small ribosomal subunit protein uS14 (101 aa).

This sequence belongs to the universal ribosomal protein uS14 family. In terms of assembly, part of the 30S ribosomal subunit. Contacts proteins S3 and S10.

Functionally, binds 16S rRNA, required for the assembly of 30S particles and may also be responsible for determining the conformation of the 16S rRNA at the A site. The protein is Small ribosomal subunit protein uS14 of Rhizobium etli (strain CIAT 652).